The chain runs to 256 residues: Receptor expression-enhancing protein 3 (256 aa).

The next 3 membrane-spanning stretches (helical) occupy residues 1–21, 42–62, and 68–88; these read MVSWMISRSVVLVFGNLYPAY, WIVFALFTVVETVADLTIAWF, and IKIAFVIWLLSPYTRGASVIY. The disordered stretch occupies residues 177–256; sequence IMDQPDGAEY…NATTYSNMES (80 aa). The segment covering 247-256 has biased composition (polar residues); it reads NATTYSNMES.

Belongs to the DP1 family.

Its subcellular location is the endoplasmic reticulum membrane. Its function is as follows. Microtubule-binding protein required to ensure proper cell division and nuclear envelope reassembly by sequestering the endoplasmic reticulum away from chromosomes during mitosis. Probably acts by clearing the endoplasmic reticulum membrane from metaphase chromosomes. The chain is Receptor expression-enhancing protein 3 (reep3) from Danio rerio (Zebrafish).